Consider the following 151-residue polypeptide: Phosphopantetheine adenylyltransferase (151 aa).

Threonine 9 is a binding site for substrate. ATP contacts are provided by residues 9–10 (TF) and histidine 17. Lysine 41, threonine 73, and arginine 87 together coordinate substrate. ATP-binding positions include 88 to 90 (GIR), glutamate 98, and 122 to 128 (LTCVSST).

The protein belongs to the bacterial CoaD family. In terms of assembly, homohexamer. It depends on Mg(2+) as a cofactor.

Its subcellular location is the cytoplasm. The catalysed reaction is (R)-4'-phosphopantetheine + ATP + H(+) = 3'-dephospho-CoA + diphosphate. Its pathway is cofactor biosynthesis; coenzyme A biosynthesis; CoA from (R)-pantothenate: step 4/5. In terms of biological role, reversibly transfers an adenylyl group from ATP to 4'-phosphopantetheine, yielding dephospho-CoA (dPCoA) and pyrophosphate. This chain is Phosphopantetheine adenylyltransferase, found in Bacteroides thetaiotaomicron (strain ATCC 29148 / DSM 2079 / JCM 5827 / CCUG 10774 / NCTC 10582 / VPI-5482 / E50).